The chain runs to 127 residues: Aspartate 1-decarboxylase (127 aa).

Ser25 acts as the Schiff-base intermediate with substrate; via pyruvic acid in catalysis. Ser25 is subject to Pyruvic acid (Ser). Thr57 contacts substrate. The active-site Proton donor is the Tyr58. Residue 73-75 coordinates substrate; the sequence is GAA.

Belongs to the PanD family. Heterooctamer of four alpha and four beta subunits. Pyruvate serves as cofactor. In terms of processing, is synthesized initially as an inactive proenzyme, which is activated by self-cleavage at a specific serine bond to produce a beta-subunit with a hydroxyl group at its C-terminus and an alpha-subunit with a pyruvoyl group at its N-terminus.

Its subcellular location is the cytoplasm. It catalyses the reaction L-aspartate + H(+) = beta-alanine + CO2. It participates in cofactor biosynthesis; (R)-pantothenate biosynthesis; beta-alanine from L-aspartate: step 1/1. Its function is as follows. Catalyzes the pyruvoyl-dependent decarboxylation of aspartate to produce beta-alanine. This chain is Aspartate 1-decarboxylase, found in Bacillus subtilis (strain 168).